A 223-amino-acid chain; its full sequence is Ribosomal RNA small subunit methyltransferase G (223 aa).

S-adenosyl-L-methionine contacts are provided by residues G84, L89, 135-136 (VE), and R150.

This sequence belongs to the methyltransferase superfamily. RNA methyltransferase RsmG family.

It is found in the cytoplasm. It carries out the reaction guanosine(527) in 16S rRNA + S-adenosyl-L-methionine = N(7)-methylguanosine(527) in 16S rRNA + S-adenosyl-L-homocysteine. Functionally, specifically methylates the N7 position of guanine in position 527 of 16S rRNA. The protein is Ribosomal RNA small subunit methyltransferase G of Saccharophagus degradans (strain 2-40 / ATCC 43961 / DSM 17024).